Consider the following 491-residue polypeptide: Anhydromuropeptide permease (491 aa).

Over 1-11 (MSSQYLRIFQQ) the chain is Cytoplasmic. A helical transmembrane segment spans residues 12 to 32 (PRSAILLILGFASGLPLALTS). Residues 33–47 (GTLQAWMTVENIDLK) lie on the Periplasmic side of the membrane. A helical transmembrane segment spans residues 48–61 (TIGFFSLVGQAYVF). The Cytoplasmic portion of the chain corresponds to 62–81 (KFLWSPLMDRYTPPFFGRRR). The helical transmembrane segment at 82–105 (GWLLATQILLLVAIAAMGFLEPGT) threads the bilayer. A topological domain (periplasmic) is located at residue Gln-106. Residues 107-124 (LRWMAALAVVIAFCSASQ) traverse the membrane as a helical segment. At 125–221 (DIVFDAWKTD…VAPLRDFFGR (97 aa)) the chain is on the cytoplasmic side. Residues 222–240 (NNAWLILLLIVLYKLGDAF) traverse the membrane as a helical segment. Residues 241–264 (AMSLTTTFLIRGVGFDAGEVGVVN) lie on the Periplasmic side of the membrane. The chain crosses the membrane as a helical span at residues 265 to 284 (KTLGLLATIVGALYGGILMQ). At 285–287 (RLS) the chain is on the cytoplasmic side. The chain crosses the membrane as a helical span at residues 288-303 (LFRALLIFGILQGASN). Topologically, residues 304 to 327 (AGYWLLSITDKHLYSMGAAVFFEN) are periplasmic. Residues 328–346 (LCGGMGTSAFVALLMTLCN) traverse the membrane as a helical segment. Residues 347-421 (KSFSATQFAL…NDNFISRTAY (75 aa)) are Cytoplasmic-facing. A helical membrane pass occupies residues 422–453 (PAGYAFAMWTLAAGVSLLAVWLLLLTMDALDL). Residues 454–457 (THFS) are Periplasmic-facing. A helical transmembrane segment spans residues 458-485 (FLPALLEVGVLVALSGVVLGGLLDYLAL). At 486–491 (RKTHLT) the chain is on the cytoplasmic side.

This sequence belongs to the major facilitator superfamily.

It is found in the cell inner membrane. Functionally, permease involved in cell wall peptidoglycan recycling. Transports, from the periplasm into the cytoplasm, the disaccharide N-acetylglucosaminyl-beta-1,4-anhydro-N-acetylmuramic acid (GlcNAc-anhMurNAc) and GlcNAc-anhMurNAc-peptides. Transport is dependent on the proton motive force. The protein is Anhydromuropeptide permease (ampG) of Escherichia coli O157:H7.